Reading from the N-terminus, the 201-residue chain is MRHQRLEGRHIIRIAPGEYHVTTGGGVISTLLGSCVAACLFDSESGVAGMNHFLLSNHRYSRTMPFCFTEAGRYGIHSMELLINSLMRHGARRENLRAKAFGGASILVNRAEVGNFSCVGSVNARFVREFLANEGIPLLSADLEGERGRVIYFDTTDFSVFVRKIRLQRSLVVAKRDRNVWEHGVQAHDVEPDSVDLWLPG.

This sequence belongs to the CheD family.

It catalyses the reaction L-glutaminyl-[protein] + H2O = L-glutamyl-[protein] + NH4(+). Probably deamidates glutamine residues to glutamate on methyl-accepting chemotaxis receptors (MCPs), playing an important role in chemotaxis. The protein is Probable chemoreceptor glutamine deamidase CheD 1 of Geobacter sulfurreducens (strain ATCC 51573 / DSM 12127 / PCA).